Here is a 464-residue protein sequence, read N- to C-terminus: UDP-N-acetylmuramoylalanine--D-glutamate ligase (464 aa).

Position 127–133 (127–133 (GSNGKST)) interacts with ATP.

Belongs to the MurCDEF family.

It localises to the cytoplasm. The catalysed reaction is UDP-N-acetyl-alpha-D-muramoyl-L-alanine + D-glutamate + ATP = UDP-N-acetyl-alpha-D-muramoyl-L-alanyl-D-glutamate + ADP + phosphate + H(+). It functions in the pathway cell wall biogenesis; peptidoglycan biosynthesis. Functionally, cell wall formation. Catalyzes the addition of glutamate to the nucleotide precursor UDP-N-acetylmuramoyl-L-alanine (UMA). This chain is UDP-N-acetylmuramoylalanine--D-glutamate ligase, found in Roseobacter denitrificans (strain ATCC 33942 / OCh 114) (Erythrobacter sp. (strain OCh 114)).